The primary structure comprises 2452 residues: Lovastatin diketide synthase lovF (2452 aa).

The Ketosynthase family 3 (KS3) domain occupies 10-381; it reads PAPIAVVGMG…GANAHAIVER (372 aa). Catalysis depends on for beta-ketoacyl synthase activity residues Cys173, His308, and His343. The malonyl-CoA:ACP transacylase (MAT) domain stretch occupies residues 496–790; sequence VFTGQGAQWF…PYLSCLSRGK (295 aa). Ser555 serves as the catalytic For malonyltransferase activity. An N-terminal hotdog fold region spans residues 861–998; the sequence is HDLIGLQEPL…GLVRVDMDQP (138 aa). A dehydratase (DH) domain region spans residues 861 to 1166; that stretch reads HDLIGLQEPL…LEGLVFQSLG (306 aa). Residues 861–1171 form the PKS/mFAS DH domain; sequence HDLIGLQEPL…FQSLGASLGT (311 aa). The Proton acceptor; for dehydratase activity role is filled by His893. A disordered region spans residues 997–1017; it reads QPASSLSNPQRADPRPWSRKT. Positions 1012–1171 are C-terminal hotdog fold; that stretch reads PWSRKTAPQD…FQSLGASLGT (160 aa). The active-site Proton donor; for dehydratase activity is Asp1079. Residues 1343 to 1528 form a methyltransferase (CMet) domain region; it reads ELVRLCCHKN…RDCDSDEFYM (186 aa). Positions 1745–2064 are enoylreductase (ER) domain; that stretch reads GLLDSLYFRK…SGQHVGKIVV (320 aa). Positions 2088–2260 are ketoreductase (KR) domain; sequence SYLVAGGLGG…AVTIDLGMVQ (173 aa). A Carrier domain is found at 2373 to 2450; sequence ASIAVIMEAM…KVAEVVLQRY (78 aa). O-(pantetheine 4'-phosphoryl)serine is present on Ser2410.

In terms of assembly, interacts with LovD. It depends on pantetheine 4'-phosphate as a cofactor.

The catalysed reaction is holo-[2-methylbutanoate polyketide synthase] + 2 malonyl-CoA + S-adenosyl-L-methionine + 2 NADPH + 3 H(+) = (S)-2-methylbutanoyl-[2-methylbutanoate polyketide synthase] + S-adenosyl-L-homocysteine + 2 CO2 + 2 NADP(+) + 2 CoA + H2O. The protein operates within polyketide biosynthesis; lovastatin biosynthesis. In terms of biological role, lovastatin diketide synthase; part of the gene cluster that mediates the biosynthesis of lovastatin (also known as mevinolin, mevacor or monacolin K), a hypolipidemic inhibitor of (3S)-hydroxymethylglutaryl-coenzyme A (HMG-CoA) reductase (HMGR). The first step in the biosynthesis of lovastatin is the production of dihydromonacolin L acid by the lovastatin nonaketide synthase lovB and the trans-acting enoyl reductase lovC via condensation of one acetyl-CoA unit and 8 malonyl-CoA units. Dihydromonacolin L acid is released from lovB by the thioesterase lovG. Next, dihydromonacolin L acid is oxidized by the dihydromonacolin L monooxygenase lovA twice to form monacolin J acid. The 2-methylbutyrate moiety of lovastatin is synthesized by the lovastatin diketide synthase lovF via condensation of one acetyl-CoA unit and one malonyl-CoA unit. Finally, the covalent attachment of this moiety to monacolin J acid is catalyzed by the transesterase lovD to yield lovastatin. LovD has broad substrate specificity and can also convert monacolin J to simvastatin using alpha-dimethylbutanoyl-S-methyl-3-mercaptopropionate (DMB-S-MMP) as the thioester acyl donor, and can also catalyze the reverse reaction and function as hydrolase in vitro. LovD has much higher activity with LovF-bound 2-methylbutanoate than with free diketide substrates. The protein is Lovastatin diketide synthase lovF of Aspergillus terreus (strain NIH 2624 / FGSC A1156).